The chain runs to 295 residues: Nucleotide-binding protein Sare_3328 (295 aa).

19 to 26 (GVSGGGRS) lines the ATP pocket. 70–73 (DVRS) is a binding site for GTP.

This sequence belongs to the RapZ-like family.

In terms of biological role, displays ATPase and GTPase activities. The polypeptide is Nucleotide-binding protein Sare_3328 (Salinispora arenicola (strain CNS-205)).